The sequence spans 118 residues: Myotrophin (118 aa).

Residue Cys2 is modified to N-acetylcysteine. An ANK 1 repeat occupies 2 to 30 (CDKEFMWALKNGDLDEVKDYVAKGEDVNR). Residues Lys4, Lys11, and Lys24 each carry the N6-acetyllysine modification. Thr31 carries the phosphothreonine modification. ANK repeat units follow at residues 34–66 (GGRKPLHYAADCGQLEILEFLLLKGADINAPDK) and 67–99 (HHITPLLSAVYEGHVSCVKLLLSKGADKTVKGP).

The protein belongs to the myotrophin family. Interacts with the heterodimer formed by CAPZA1 and CAPZB. Interacts with RELA.

The protein localises to the cytoplasm. The protein resides in the nucleus. It localises to the perinuclear region. Plays a role in the regulation of the growth of actin filaments. Inhibits the activity of the F-actin-capping protein complex formed by the CAPZA1 and CAPZB heterodimer. Promotes dimerization of NF-kappa-B subunits and regulates NF-kappa-B transcription factor activity. Promotes growth of cardiomyocytes, but not cardiomyocyte proliferation. Promotes cardiac muscle hypertrophy. In Rattus norvegicus (Rat), this protein is Myotrophin (Mtpn).